The sequence spans 77 residues: Putative defensin-like protein 60 (77 aa).

Positions 1–25 (MKMNITKSYVILFLVVVMTNSLSNS) are cleaved as a signal peptide. 4 cysteine pairs are disulfide-bonded: cysteine 41-cysteine 75, cysteine 45-cysteine 68, cysteine 54-cysteine 73, and cysteine 58-cysteine 74.

This sequence belongs to the DEFL family.

The protein localises to the secreted. This chain is Putative defensin-like protein 60, found in Arabidopsis thaliana (Mouse-ear cress).